The following is a 491-amino-acid chain: Nicotinamide phosphoribosyltransferase (491 aa).

The residue at position 1 (Met-1) is an N-acetylmethionine. Tyr-188 is subject to Phosphotyrosine. Position 196 (Arg-196) interacts with diphosphate. Beta-nicotinamide D-ribonucleotide is bound at residue Asp-219. Residues His-247 and Arg-311 each contribute to the diphosphate site. Beta-nicotinamide D-ribonucleotide is bound by residues 311–313 (RPD), 353–354 (GD), Gly-384, and Arg-392. Phosphoserine is present on Ser-472.

Belongs to the NAPRTase family. Homodimer.

It is found in the nucleus. The protein localises to the cytoplasm. It localises to the secreted. The catalysed reaction is beta-nicotinamide D-ribonucleotide + diphosphate = 5-phospho-alpha-D-ribose 1-diphosphate + nicotinamide + H(+). It participates in cofactor biosynthesis; NAD(+) biosynthesis; nicotinamide D-ribonucleotide from 5-phospho-alpha-D-ribose 1-diphosphate and nicotinamide: step 1/1. In terms of biological role, catalyzes the condensation of nicotinamide with 5-phosphoribosyl-1-pyrophosphate to yield nicotinamide mononucleotide, an intermediate in the biosynthesis of NAD. It is the rate limiting component in the mammalian NAD biosynthesis pathway. The secreted form behaves both as a cytokine with immunomodulating properties and an adipokine with anti-diabetic properties, it has no enzymatic activity, partly because of lack of activation by ATP, which has a low level in extracellular space and plasma. Plays a role in the modulation of circadian clock function. Plays a role in the modulation of circadian clock function. NAMPT-dependent oscillatory production of NAD regulates oscillation of clock target gene expression by releasing the core clock component: CLOCK-BMAL1 heterodimer from NAD-dependent SIRT1-mediated suppression. In Sus scrofa (Pig), this protein is Nicotinamide phosphoribosyltransferase (NAMPT).